Reading from the N-terminus, the 64-residue chain is Large ribosomal subunit protein bL35 (64 aa).

Positions methionine 1–arginine 15 are enriched in basic residues. Residues methionine 1–glycine 20 are disordered.

It belongs to the bacterial ribosomal protein bL35 family.

This Nocardioides sp. (strain ATCC BAA-499 / JS614) protein is Large ribosomal subunit protein bL35.